The primary structure comprises 216 residues: Orotate phosphoribosyltransferase (216 aa).

Lys30 contacts 5-phospho-alpha-D-ribose 1-diphosphate. 38 to 39 is an orotate binding site; the sequence is FF. Residues 75–76, Arg102, Lys103, Lys106, His108, and 128–136 contribute to the 5-phospho-alpha-D-ribose 1-diphosphate site; these read YK and DDVITAGTA. Residues Thr132 and Arg160 each coordinate orotate.

Belongs to the purine/pyrimidine phosphoribosyltransferase family. PyrE subfamily. As to quaternary structure, homodimer. It depends on Mg(2+) as a cofactor.

It carries out the reaction orotidine 5'-phosphate + diphosphate = orotate + 5-phospho-alpha-D-ribose 1-diphosphate. Its pathway is pyrimidine metabolism; UMP biosynthesis via de novo pathway; UMP from orotate: step 1/2. In terms of biological role, catalyzes the transfer of a ribosyl phosphate group from 5-phosphoribose 1-diphosphate to orotate, leading to the formation of orotidine monophosphate (OMP). The protein is Orotate phosphoribosyltransferase of Acinetobacter baylyi (strain ATCC 33305 / BD413 / ADP1).